We begin with the raw amino-acid sequence, 446 residues long: Argininosuccinate lyase (446 aa).

The protein belongs to the lyase 1 family. Argininosuccinate lyase subfamily.

It is found in the cytoplasm. It carries out the reaction 2-(N(omega)-L-arginino)succinate = fumarate + L-arginine. It participates in amino-acid biosynthesis; L-arginine biosynthesis; L-arginine from L-ornithine and carbamoyl phosphate: step 3/3. This Bacteroides thetaiotaomicron (strain ATCC 29148 / DSM 2079 / JCM 5827 / CCUG 10774 / NCTC 10582 / VPI-5482 / E50) protein is Argininosuccinate lyase.